Consider the following 298-residue polypeptide: Ribosomal protein L11 methyltransferase (298 aa).

Thr152, Gly173, Asp195, and Asn234 together coordinate S-adenosyl-L-methionine.

It belongs to the methyltransferase superfamily. PrmA family.

The protein resides in the cytoplasm. The enzyme catalyses L-lysyl-[protein] + 3 S-adenosyl-L-methionine = N(6),N(6),N(6)-trimethyl-L-lysyl-[protein] + 3 S-adenosyl-L-homocysteine + 3 H(+). Methylates ribosomal protein L11. The chain is Ribosomal protein L11 methyltransferase from Ralstonia pickettii (strain 12J).